The following is a 744-amino-acid chain: Deleted in azoospermia protein 1 (744 aa).

Residues 1 to 10 (MSAANPETPN) show a composition bias toward polar residues. Residues 1–27 (MSAANPETPNSTISREASTQSSSAAAS) are disordered. Positions 11-27 (STISREASTQSSSAAAS) are enriched in low complexity. In terms of domain architecture, RRM 1 spans 40–115 (NTVFVGGIDA…KKLKLGPAIR (76 aa)). Over residues 163–175 (QHVQSAANPETPN) the composition is skewed to polar residues. The segment at 163-192 (QHVQSAANPETPNSTISREASTQSSSAAAS) is disordered. Residues 176–192 (STISREASTQSSSAAAS) are compositionally biased toward low complexity. The RRM 2 domain maps to 205-280 (NTVFVGGIDA…KKLKLGPAIR (76 aa)). The segment covering 328–340 (QHVQSAANPETPN) has biased composition (polar residues). Residues 328 to 357 (QHVQSAANPETPNSTISREASTQSSSAAAS) form a disordered region. Residues 341–357 (STISREASTQSSSAAAS) are compositionally biased toward low complexity. The 76-residue stretch at 370-445 (NTVFVGGIDA…KKLKLGPAIR (76 aa)) folds into the RRM 3 domain. DAZ domains lie at 497-520 (AYSAYPHSPGQVITGCQLLVYNYQ), 521-544 (EYPTYPDSAFQVTTGYQLPVYNYQ), 545-568 (PFPAYPRSPFQVTAGYQLPVYNYQ), 569-592 (AFPAYPNSPFQVATGYQFPVYNYQ), 593-616 (PFPAYPSSPFQVTAGYQLPVYNYQ), 617-640 (AFPAYPNSPFQVATGYQFPVYNYQ), 641-664 (AFPAYPNSPVQVTTGYQLPVYNYQ), 665-688 (AFPAYPSSPFQVTTGYQLPVYNYQ), and 689-712 (AFPAYPNSAVQVTTGYQFHVYNYQ).

It belongs to the RRM DAZ family. In terms of assembly, forms a heterodimer with BOLL and DAZL. Interacts with PUM2, DAZAP1, DAZAP2, DZIP1 and DZIP3. In terms of tissue distribution, testis-specific. Expression restricted to premeiotic germ cells, particularly in spermatogonia (at protein level).

Its subcellular location is the cytoplasm. It is found in the nucleus. In terms of biological role, RNA-binding protein that plays an essential role in spermatogenesis. May act by binding to the 3'-UTR of mRNAs and regulating their translation. Promotes germ-cell progression to meiosis and formation of haploid germ cells. The chain is Deleted in azoospermia protein 1 (DAZ1) from Homo sapiens (Human).